Reading from the N-terminus, the 681-residue chain is Sorting nexin-41 (681 aa).

Acidic residues predominate over residues 1–12 (MSTDNLFEDIEQ). Positions 1-94 (MSTDNLFEDI…HNTSLNNGYP (94 aa)) are disordered. Residues 13 to 24 (DNNPSFYGNPSI) are compositionally biased toward polar residues. In terms of domain architecture, PX spans 113–236 (NDSQLQVDII…KFFDPNYELC (124 aa)). R151, S153, K177, and R200 together coordinate a 1,2-diacyl-sn-glycero-3-phospho-(1D-myo-inositol-3-phosphate). Disordered regions lie at residues 475-505 (LASRISTDNDSNNSNNSGNNNNDGDLDTENF) and 558-597 (TATGSTEQQSQQQSAPNSPQREQQQQQSQSQSHHSHQTSI). Low complexity-rich tracts occupy residues 482 to 497 (DNDSNNSNNSGNNNND) and 558 to 589 (TATGSTEQQSQQQSAPNSPQREQQQQQSQSQS).

The protein belongs to the sorting nexin family.

It localises to the endosome membrane. The protein resides in the endomembrane system. Its function is as follows. May be required for cytoplasm to vacuole transport (Cvt) and pexophagy. The sequence is that of Sorting nexin-41 (SNX41) from Candida albicans (strain SC5314 / ATCC MYA-2876) (Yeast).